Reading from the N-terminus, the 71-residue chain is DNA gyrase inhibitor YacG (71 aa).

Residues cysteine 7, cysteine 10, cysteine 26, and cysteine 30 each contribute to the Zn(2+) site.

This sequence belongs to the DNA gyrase inhibitor YacG family. In terms of assembly, interacts with GyrB. It depends on Zn(2+) as a cofactor.

Its function is as follows. Inhibits all the catalytic activities of DNA gyrase by preventing its interaction with DNA. Acts by binding directly to the C-terminal domain of GyrB, which probably disrupts DNA binding by the gyrase. In Shewanella amazonensis (strain ATCC BAA-1098 / SB2B), this protein is DNA gyrase inhibitor YacG.